We begin with the raw amino-acid sequence, 281 residues long: Protoheme IX farnesyltransferase (281 aa).

9 helical membrane passes run 16-36 (TFLL…GADF), 38-58 (FVIA…INMW), 75-95 (VPAG…IFAI), 101-121 (FLVS…DIVV), 129-149 (KSPY…LGGW), 150-170 (VAVQ…LLWI), 202-224 (ASWA…YVLL), 228-250 (IFYL…KFAL), and 261-281 (YKLA…GVFL).

This sequence belongs to the UbiA prenyltransferase family. Protoheme IX farnesyltransferase subfamily.

Its subcellular location is the cell membrane. The enzyme catalyses heme b + (2E,6E)-farnesyl diphosphate + H2O = Fe(II)-heme o + diphosphate. The protein operates within porphyrin-containing compound metabolism; heme O biosynthesis; heme O from protoheme: step 1/1. Functionally, converts heme B (protoheme IX) to heme O by substitution of the vinyl group on carbon 2 of heme B porphyrin ring with a hydroxyethyl farnesyl side group. This Archaeoglobus fulgidus (strain ATCC 49558 / DSM 4304 / JCM 9628 / NBRC 100126 / VC-16) protein is Protoheme IX farnesyltransferase.